A 180-amino-acid polypeptide reads, in one-letter code: Succinate dehydrogenase cytochrome B subunit, mitochondrial (180 aa).

The Mitochondrial matrix segment spans residues 1–82; it reads MFATRSFCLS…WYLSSLHRIT (82 aa). Residues 83–103 form a helical membrane-spanning segment; sequence GCVVAGTLYAFAMGYLVAPLA. The Mitochondrial intermembrane portion of the chain corresponds to 104–122; it reads GYSLDTATISGLIQQVPTW. A helical membrane pass occupies residues 123-143; that stretch reads IKVPAKFVISYPLTFHIFNGI. Residue His-138 coordinates heme. Residues 144–159 are Mitochondrial matrix-facing; that stretch reads RHLIWDTTKELSLKGV. The helical transmembrane segment at 160–180 threads the bilayer; it reads YRTGYAVLALSVLTSGYFAMI.

It belongs to the cytochrome b560 family. Forms part of complex II containing four subunits: a 70 kDa flavoprotein (FP), a 27 kDa iron-sulfur protein (IP), a cytochrome B and a membrane-anchoring protein. Heme is required as a cofactor.

The protein localises to the mitochondrion inner membrane. It functions in the pathway carbohydrate metabolism; tricarboxylic acid cycle. Membrane-anchoring subunit of succinate dehydrogenase (SDH) that is involved in complex II of the mitochondrial electron transport chain and is responsible for transferring electrons from succinate to ubiquinone (coenzyme Q). The protein is Succinate dehydrogenase cytochrome B subunit, mitochondrial (sdh3) of Schizosaccharomyces pombe (strain 972 / ATCC 24843) (Fission yeast).